A 77-amino-acid chain; its full sequence is Large ribosomal subunit protein uL24 (77 aa).

Belongs to the universal ribosomal protein uL24 family. In terms of assembly, part of the 50S ribosomal subunit.

In terms of biological role, one of two assembly initiator proteins, it binds directly to the 5'-end of the 23S rRNA, where it nucleates assembly of the 50S subunit. Functionally, one of the proteins that surrounds the polypeptide exit tunnel on the outside of the subunit. In Sulfurovum sp. (strain NBC37-1), this protein is Large ribosomal subunit protein uL24.